A 312-amino-acid polypeptide reads, in one-letter code: uncharacterized protein (312 aa).

Composition is skewed to basic and acidic residues over residues 1–17 (MAKY…EQLE) and 28–39 (PDRDGPRHSAKL). The tract at residues 1–39 (MAKYDHLELVRLPEQLERRKHGGGSPPPDRDGPRHSAKL) is disordered.

This is an uncharacterized protein from Sinorhizobium fredii (strain NBRC 101917 / NGR234).